The primary structure comprises 597 residues: K(+) efflux antiporter 6 (597 aa).

Residues 1-35 form the signal peptide; it reads MVEGRRRRRFSLSSQQLALLLLLLSFFLCFSVASP. Helical transmembrane passes span 177–197, 201–221, 224–244, 257–277, 287–307, 321–341, 351–371, 396–416, 440–460, 461–481, 499–519, and 543–563; these read LISD…AFAC, PVIT…LNFI, MVQV…ALGL, VAVL…GITV, GVFV…KFLM, IGIL…LPVL, MLSI…LSIL, LAAV…GLSL, IEPI…MLVN, VHFL…VIII, TALL…VLLS, and LVTT…GILL.

The protein belongs to the monovalent cation:proton antiporter 2 (CPA2) transporter (TC 2.A.37) family. KEA (TC 2.A.37.1) subfamily. Expressed in roots, stems, leaves, flowers and silique.

It is found in the golgi apparatus membrane. The protein localises to the golgi apparatus. The protein resides in the trans-Golgi network membrane. It localises to the prevacuolar compartment membrane. Its subcellular location is the endomembrane system. It carries out the reaction K(+)(in) + H(+)(out) = K(+)(out) + H(+)(in). Functionally, electroneutral K(+)/H(+) efflux antiporter involved in K(+) homeostasis and osmotic adjustment. Together with KEA4 and KEA5, promotes growth and development, and facilitates endosomal pH and ions homeostasis, as well as salt tolerance (e.g. K(+), NaCl and LiCl), probably by supporting cell wall biosynthesis during rapid etiolated seedling growth. This is K(+) efflux antiporter 6 from Arabidopsis thaliana (Mouse-ear cress).